A 171-amino-acid chain; its full sequence is Ribosome maturation factor RimM (171 aa).

The PRC barrel domain occupies 97–170 (KLNYFSWDHY…IIYMKLPVGL (74 aa)).

Belongs to the RimM family. In terms of assembly, binds ribosomal protein uS19.

It is found in the cytoplasm. Its function is as follows. An accessory protein needed during the final step in the assembly of 30S ribosomal subunit, possibly for assembly of the head region. Essential for efficient processing of 16S rRNA. May be needed both before and after RbfA during the maturation of 16S rRNA. It has affinity for free ribosomal 30S subunits but not for 70S ribosomes. In Azobacteroides pseudotrichonymphae genomovar. CFP2, this protein is Ribosome maturation factor RimM.